The chain runs to 548 residues: Folylpolyglutamate synthase (548 aa).

130–133 contributes to the ATP binding site; that stretch reads GKGS. Residues Ser-157, Glu-234, and His-262 each contribute to the Mg(2+) site. Residues Arg-382 and Asp-396 each contribute to the ATP site.

It belongs to the folylpolyglutamate synthase family. A monovalent cation is required as a cofactor.

It is found in the mitochondrion inner membrane. The protein localises to the mitochondrion matrix. Its subcellular location is the cytoplasm. It carries out the reaction (6S)-5,6,7,8-tetrahydrofolyl-(gamma-L-Glu)(n) + L-glutamate + ATP = (6S)-5,6,7,8-tetrahydrofolyl-(gamma-L-Glu)(n+1) + ADP + phosphate + H(+). Its pathway is cofactor biosynthesis; tetrahydrofolylpolyglutamate biosynthesis. Catalyzes conversion of folates to polyglutamate derivatives allowing concentration of folate compounds in the cell and the intracellular retention of these cofactors, which are important substrates for most of the folate-dependent enzymes that are involved in one-carbon transfer reactions involved in purine, pyrimidine and amino acid synthesis. Required for methionine synthesis and maintenance of intact mitochondrial DNA. Involved in telomere maintenance. The polypeptide is Folylpolyglutamate synthase (Saccharomyces cerevisiae (strain FostersB) (Baker's yeast)).